The sequence spans 160 residues: Large ribosomal subunit protein uL22c (160 aa).

The protein belongs to the universal ribosomal protein uL22 family. Part of the 50S ribosomal subunit.

Its subcellular location is the plastid. The protein localises to the chloroplast. In terms of biological role, this protein binds specifically to 23S rRNA. Its function is as follows. The globular domain of the protein is located near the polypeptide exit tunnel on the outside of the subunit, while an extended beta-hairpin is found that lines the wall of the exit tunnel in the center of the 70S ribosome. In Crucihimalaya wallichii (Rock-cress), this protein is Large ribosomal subunit protein uL22c (rpl22).